Here is a 318-residue protein sequence, read N- to C-terminus: MDVRADQHQYNPYRVFSRDQWAKLRDDAPMTLDAQEISALRSMHDRLDLQEVEEIYLPLSRLLSIYVASMQQLYVAQRRFLGIVDRKMPYIIGVAGSVAVGKSTTARVLQALLARWSPRPKVDLITTDGFLYPNAVLERQGIMQKKGFPESYDLPKLLAFLSDIKAGRRRVRAPVYSHLTYDIVPNSHITVDRPDILIVEGVNVLQTGKLPRDGKAVPVVSDFFDFSVYIDAEEPVLREWYVSRFLALRDTAFHDPRSYFHRYAPLSDEEATATALAIWERTNLANLEDNILPTRPRATLILKKGADHVVETVALRRL.

An ATP-binding site is contributed by 96–103 (GSVAVGKS).

This sequence belongs to the prokaryotic pantothenate kinase family.

The protein resides in the cytoplasm. The catalysed reaction is (R)-pantothenate + ATP = (R)-4'-phosphopantothenate + ADP + H(+). The protein operates within cofactor biosynthesis; coenzyme A biosynthesis; CoA from (R)-pantothenate: step 1/5. This is Pantothenate kinase from Rhodopseudomonas palustris (strain BisA53).